Reading from the N-terminus, the 600-residue chain is Adenine deaminase (600 aa).

It belongs to the metallo-dependent hydrolases superfamily. Adenine deaminase family. Mn(2+) serves as cofactor.

The catalysed reaction is adenine + H2O + H(+) = hypoxanthine + NH4(+). The chain is Adenine deaminase from Chelativorans sp. (strain BNC1).